We begin with the raw amino-acid sequence, 461 residues long: Glycine--tRNA ligase (461 aa).

Residues R100 and E163 each contribute to the substrate site. ATP-binding positions include R195–E197, F205–F210, E282–L283, and G326–R329. F210 to E214 lines the substrate pocket. E322–G326 is a binding site for substrate.

The protein belongs to the class-II aminoacyl-tRNA synthetase family. In terms of assembly, homodimer.

It is found in the cytoplasm. It carries out the reaction tRNA(Gly) + glycine + ATP = glycyl-tRNA(Gly) + AMP + diphosphate. Catalyzes the attachment of glycine to tRNA(Gly). This is Glycine--tRNA ligase from Corynebacterium efficiens (strain DSM 44549 / YS-314 / AJ 12310 / JCM 11189 / NBRC 100395).